The sequence spans 117 residues: Ribosome-binding factor A (117 aa).

This sequence belongs to the RbfA family. In terms of assembly, monomer. Binds 30S ribosomal subunits, but not 50S ribosomal subunits or 70S ribosomes.

Its subcellular location is the cytoplasm. Functionally, one of several proteins that assist in the late maturation steps of the functional core of the 30S ribosomal subunit. Associates with free 30S ribosomal subunits (but not with 30S subunits that are part of 70S ribosomes or polysomes). Required for efficient processing of 16S rRNA. May interact with the 5'-terminal helix region of 16S rRNA. The sequence is that of Ribosome-binding factor A from Streptococcus suis (strain 98HAH33).